Consider the following 227-residue polypeptide: NADH-quinone oxidoreductase subunit C (227 aa).

This sequence belongs to the complex I 30 kDa subunit family. As to quaternary structure, NDH-1 is composed of 14 different subunits. Subunits NuoB, C, D, E, F, and G constitute the peripheral sector of the complex.

It localises to the cell inner membrane. It carries out the reaction a quinone + NADH + 5 H(+)(in) = a quinol + NAD(+) + 4 H(+)(out). In terms of biological role, NDH-1 shuttles electrons from NADH, via FMN and iron-sulfur (Fe-S) centers, to quinones in the respiratory chain. The immediate electron acceptor for the enzyme in this species is believed to be ubiquinone. Couples the redox reaction to proton translocation (for every two electrons transferred, four hydrogen ions are translocated across the cytoplasmic membrane), and thus conserves the redox energy in a proton gradient. In Legionella pneumophila subsp. pneumophila (strain Philadelphia 1 / ATCC 33152 / DSM 7513), this protein is NADH-quinone oxidoreductase subunit C.